Reading from the N-terminus, the 638-residue chain is Factor of DNA methylation 3 (638 aa).

The stretch at 318 to 497 forms a coiled coil; it reads FNRIFADHEK…RALISNLRDM (180 aa).

In terms of biological role, acts in association with FDM4 and FDM5 for RNA-directed DNA methylation (RdDM). The sequence is that of Factor of DNA methylation 3 from Arabidopsis thaliana (Mouse-ear cress).